The primary structure comprises 469 residues: Calcium-binding mitochondrial carrier protein SCaMC-2-A (469 aa).

Topologically, residues 1–189 are mitochondrial intermembrane; it reads MLCLCLYVPV…EHLTGMWWRH (189 aa). 3 EF-hand domains span residues 47 to 80, 78 to 113, and 114 to 149; these read TYRRWRKKSLKTEEKEHDGQLDFEEFVHYLQDHE, DHEKDLKLVFKSMDRKIAGQVNANDIVNSLRDLGVH, and ISLKQAEKVLKSMDKNGTMTIDWNEWKKYPTLQPAE. Ca(2+) contacts are provided by Asp-64, Gln-66, and Glu-71. 3 Solcar repeats span residues 184–270, 278–363, and 375–463; these read GMWW…IKRV, LGIS…LKNT, and PGVF…IKST. The chain crosses the membrane as a helical span at residues 190–207; it reads LVSGGGAGAVSRTCTAPL. Residues 208–244 are Mitochondrial matrix-facing; the sequence is DRLKVLMQVHGCQGKSMCLMSGLTQMIKEGGVRSLWR. A helical transmembrane segment spans residues 245-264; the sequence is GNGINVIKIAPETALKFMAY. At 265 to 287 the chain is on the mitochondrial intermembrane side; sequence EQIKRVMGSSQETLGISERFVAG. Residues 288-301 form a helical membrane-spanning segment; it reads SLAGVIAQSTIYPM. The Mitochondrial matrix segment spans residues 302–337; it reads EVLKTRLALRKTGQYKGISDCAKHILKTEGMSAFYK. The helical transmembrane segment at 338–357 threads the bilayer; the sequence is GYVPNMLGIIPYAGIDLAVY. At 358–380 the chain is on the mitochondrial intermembrane side; that stretch reads ETLKNTWLQRYGTENADPGVFVL. A helical transmembrane segment spans residues 381-398; the sequence is LACGTVSSTCGQLASYPL. Topologically, residues 399-437 are mitochondrial matrix; sequence ALIRTRMQAQASVEGSSQVSMTGLFKQIMKTEGPTGLYR. Residues 438–457 form a helical membrane-spanning segment; sequence GLTPNFLKVIPAVSISYVVY. The Mitochondrial intermembrane portion of the chain corresponds to 458-469; the sequence is EHIKSTLGVRSR.

It belongs to the mitochondrial carrier (TC 2.A.29) family.

Its subcellular location is the mitochondrion inner membrane. Functionally, calcium-dependent mitochondrial solute carrier. The polypeptide is Calcium-binding mitochondrial carrier protein SCaMC-2-A (slc25a25a) (Danio rerio (Zebrafish)).